Consider the following 132-residue polypeptide: MVLTDPIADFLTRIRNANMAKHDSVEIPASNIKKSLTEILKQEGFIRDYEVTEDGKQGVIKITLKYGPNGERVISGLKRISKPGLRNYVSADNLPKVLNGLGIAIVSTSAGILTDKEAREKNVGGEVIAYVW.

It belongs to the universal ribosomal protein uS8 family. In terms of assembly, part of the 30S ribosomal subunit. Contacts proteins S5 and S12.

In terms of biological role, one of the primary rRNA binding proteins, it binds directly to 16S rRNA central domain where it helps coordinate assembly of the platform of the 30S subunit. This is Small ribosomal subunit protein uS8 from Lactobacillus delbrueckii subsp. bulgaricus (strain ATCC BAA-365 / Lb-18).